Consider the following 215-residue polypeptide: Ubiquitin-conjugating enzyme E2 S (215 aa).

Residues 9 to 155 (DVIKRVVKEL…AKLFTSIHAS (147 aa)) enclose the UBC core domain. Residue Cys-93 is the Glycyl thioester intermediate of the active site. The disordered stretch occupies residues 159 to 215 (IDSNNNNENSTTTPTTTTTATTPSTNTASISSPVKKKTETTNSTTTKVQPKKSLKRL). Residues 161-190 (SNNNNENSTTTPTTTTTATTPSTNTASISS) show a composition bias toward low complexity.

Belongs to the ubiquitin-conjugating enzyme family.

The enzyme catalyses S-ubiquitinyl-[E1 ubiquitin-activating enzyme]-L-cysteine + [E2 ubiquitin-conjugating enzyme]-L-cysteine = [E1 ubiquitin-activating enzyme]-L-cysteine + S-ubiquitinyl-[E2 ubiquitin-conjugating enzyme]-L-cysteine.. It participates in protein modification; protein ubiquitination. Functionally, catalyzes the covalent attachment of ubiquitin to other proteins. Acts as an essential factor of the anaphase promoting complex/cyclosome (APC/C), a cell cycle-regulated ubiquitin ligase that controls progression through mitosis. Acts by specifically elongating polyubiquitin chains initiated by the E2 enzyme ubch10 on APC/C substrates, enhancing the degradation of APC/C substrates by the proteasome and promoting mitotic exit. The protein is Ubiquitin-conjugating enzyme E2 S (ube2s) of Dictyostelium discoideum (Social amoeba).